We begin with the raw amino-acid sequence, 1002 residues long: Leucine-rich repeat receptor-like serine/threonine-protein kinase BAM2 (1002 aa).

The N-terminal stretch at 1–22 (MKLLLLLLLLLLLHISHSFTVA) is a signal peptide. At 23–636 (KPITELHALL…SHVKPLSATT (614 aa)) the chain is on the extracellular side. Residues Asn51, Asn80, Asn97, Asn123, Asn130, Asn153, and Asn164 are each glycosylated (N-linked (GlcNAc...) asparagine). LRR repeat units follow at residues 68–92 (LRHV…VAHL), 93–116 (PLLQ…ISNL), 118–140 (ELRH…LSSG), 141–165 (LVNL…LTNL), 167–188 (QLRH…TYGT), 189–213 (WPVL…IGNL), 215–238 (TLRE…IGNL), 239–262 (SELV…IGKL), 263–285 (QKLD…ELGL), 286–309 (ISSL…SFSQ), 311–334 (KNLT…IGEM), 335–358 (PELE…LGEN), 359–382 (GRLV…MCSG), 384–406 (RLMT…LGKC), 407–430 (ESLT…LFGL), 431–456 (PKLS…GVSG), 458–479 (LGQI…IGNL), 480–503 (SGVQ…IGRL), 505–527 (QLSK…ISRC), 528–551 (KLLT…LTGM), 552–575 (KILN…IASM), and 577–600 (SLTS…QFSY). Residues Asn212 and Asn237 are each glycosylated (N-linked (GlcNAc...) asparagine). N-linked (GlcNAc...) asparagine glycosylation is found at Asn312 and Asn346. The N-linked (GlcNAc...) asparagine glycan is linked to Asn420. Asn478 carries N-linked (GlcNAc...) asparagine glycosylation. Asn558, Asn587, and Asn602 each carry an N-linked (GlcNAc...) asparagine glycan. Residues 637–657 (KLLLVLGLLFCSMVFAIVAII) form a helical membrane-spanning segment. Over 658 to 1002 (KARSLRNASE…SGSPPDLLSN (345 aa)) the chain is Cytoplasmic. Thr682 is modified (phosphothreonine). The region spanning 690–967 (LKEDNIIGKG…VQILTEIPKI (278 aa)) is the Protein kinase domain. ATP is bound by residues 696–704 (IGKGGAGIV) and Lys718. 2 positions are modified to phosphotyrosine: Tyr765 and Tyr803. The active-site Proton acceptor is Asp816. Ser851 bears the Phosphoserine mark. Phosphotyrosine is present on residues Tyr859 and Tyr866. Thr867 carries the phosphothreonine modification. Residues 969–1002 (LSKQQAAESDVTEKAPAINESSPDSGSPPDLLSN) are disordered. Low complexity predominate over residues 989-1002 (SSPDSGSPPDLLSN).

This sequence belongs to the protein kinase superfamily. Ser/Thr protein kinase family. As to quaternary structure, interacts with BAM1 and CLV1. Binds to the CLV3, CLE11, CLE18, CLE19, CLE22, CLE25, CLE26, CLE40, CLE41 and CLE42 mature peptides, probably via its extracellular leucine-rich repeat region. As to expression, expressed in seedlings, roots, rosette leaves, stems, inflorescences, flowers and siliques.

The protein resides in the cell membrane. It carries out the reaction L-seryl-[protein] + ATP = O-phospho-L-seryl-[protein] + ADP + H(+). The enzyme catalyses L-threonyl-[protein] + ATP = O-phospho-L-threonyl-[protein] + ADP + H(+). Necessary for male gametophyte development, as well as ovule specification and function. Involved in cell-cell communication process required during early anther development, and regulating cell division and differentiation to organize cell layers. Required for the development of high-ordered vascular strands within the leaf and a correlated control of leaf shape, size and symmetry. May regulate the CLV1-dependent CLV3-mediated signaling in meristems maintenance. The polypeptide is Leucine-rich repeat receptor-like serine/threonine-protein kinase BAM2 (BAM2) (Arabidopsis thaliana (Mouse-ear cress)).